A 480-amino-acid chain; its full sequence is 6-phosphogluconate dehydrogenase, decarboxylating 1 (480 aa).

NADP(+) is bound by residues 10-15 (GLAVMG), 33-35 (NRT), 77-79 (VKA), and Asn105. Substrate-binding positions include Asn105 and 131 to 133 (SGG). Lys186 serves as the catalytic Proton acceptor. 189-190 (HN) is a binding site for substrate. The active-site Proton donor is Glu193. Positions 194, 264, 291, 450, and 456 each coordinate substrate.

Belongs to the 6-phosphogluconate dehydrogenase family. In terms of assembly, homodimer. As to expression, highly expressed in inflorescence, lowly expressed in root and embryos and almost absent in leaves.

It is found in the cytoplasm. The catalysed reaction is 6-phospho-D-gluconate + NADP(+) = D-ribulose 5-phosphate + CO2 + NADPH. It functions in the pathway carbohydrate degradation; pentose phosphate pathway; D-ribulose 5-phosphate from D-glucose 6-phosphate (oxidative stage): step 3/3. Its function is as follows. Catalyzes the oxidative decarboxylation of 6-phosphogluconate to ribulose 5-phosphate and CO(2), with concomitant reduction of NADP to NADPH. The chain is 6-phosphogluconate dehydrogenase, decarboxylating 1 (G6PGH1) from Oryza sativa subsp. japonica (Rice).